Consider the following 483-residue polypeptide: Cobyric acid synthase (483 aa).

One can recognise a GATase cobBQ-type domain in the interval 248-435; that stretch reads LLKVVVPVLP…LHGLFETPAA (188 aa). The Nucleophile role is filled by C329. The active site involves H427.

It belongs to the CobB/CobQ family. CobQ subfamily.

It participates in cofactor biosynthesis; adenosylcobalamin biosynthesis. Catalyzes amidations at positions B, D, E, and G on adenosylcobyrinic A,C-diamide. NH(2) groups are provided by glutamine, and one molecule of ATP is hydrogenolyzed for each amidation. The polypeptide is Cobyric acid synthase (Pseudomonas fluorescens (strain ATCC BAA-477 / NRRL B-23932 / Pf-5)).